Consider the following 130-residue polypeptide: Small ribosomal subunit protein uS9 (130 aa).

Residues 109–130 (RAKERKKYGLYGARRSPQFTKR) are disordered.

Belongs to the universal ribosomal protein uS9 family.

This chain is Small ribosomal subunit protein uS9, found in Malacoplasma penetrans (strain HF-2) (Mycoplasma penetrans).